The primary structure comprises 930 residues: MASGGKGEKILVSVRVRPQNEKEKARNDICDWECVNNTTIVCNNNLPERSLFPSTYTFDKVFGFDSPTKQVYEDGAKEVALCVLGGINSSIFAYGQTSSGKTYTMCGITKFAMDDIFCYIQKHTDRKFTLKFSAIEIYNEAVRDLLSGDNNQRRLLDDPERGTVVEKLIEETIQDRTHLEELLTVCETQRKIGETSLNEVSSRSHQILRLTIESTGREYSPDSSSTLAASVCFIDLAGSERASQTLSAGTRLKEGCHINRSLLTLGTVIRKLRFDPCDIAQSQVENLLKSTAEERSSRMDEQSMFSSMDFDADFRRRSYDSTDLGEPSIINNLTERNFEFLENSEEDDFLLDDKTPQFSRHNLYDDWEELVQITDERLEDACKEVRCIEPEAEQSSGQPAACESHDSLDDIKAENEDMEISTPAEKENVDLSLKTIDVNAKPETYELTLKNSDLEIGPSVEAQESQESVNEEEQMKNEERKMSPSTKQAEQCLNKEENAQSEQQSTEDCELNSLPINNQSEATVEVELTPNDAKLDEDATSRDKWESKQQQEADKDCNESSVCKNIGTDDNDNDTYMALKEKVKEMQKKIEYLMSMHTAEQQQSPSFRRDFKSPPEYFTAKRSRSCRENLLSVRSPHWFESLEVSNNTSPTWRVMQTKASPGRPNTSSISFDSGSSTSIDTRSLKDYDPEMGNSFREFVAGLEEMAKKHHSIDSTPELDYGIPYAPTKTERMEIRPESPADSVAANGQYSISSSDFERQQRKIIELWAACNVPLVHRTYFFLLFKGDPSDYVYMEVELRRLSFLKQTISNDMETSRMQTVKALTREKEWISKQLPKKFPWNQRIGLYQKWGVEVNSKQRSLQVAHKLWTNTQDMDHIKESASLVAKLLGFVEPSRMPKEMFGLSLLPRTENVKSSGWRFTKSFSAIRLTR.

Residues Lys-9–Arg-273 form the Kinesin motor domain. An ATP-binding site is contributed by Gly-95–Thr-102. Disordered regions lie at residues Leu-449–Asp-569 and Met-655–Asp-686. Residues Ser-459–Ser-468 show a composition bias toward low complexity. Composition is skewed to basic and acidic residues over residues Glu-473–Met-482 and Ala-533–Asn-558. A compositionally biased stretch (low complexity) spans Thr-666–Thr-681. A Glycyl lysine isopeptide (Lys-Gly) (interchain with G-Cter in ubiquitin) cross-link involves residue Lys-805.

This sequence belongs to the TRAFAC class myosin-kinesin ATPase superfamily. Kinesin family. KIN-7 subfamily.

This chain is Kinesin-like protein KIN-7J, found in Arabidopsis thaliana (Mouse-ear cress).